Consider the following 234-residue polypeptide: tRNA1(Val) (adenine(37)-N6)-methyltransferase (234 aa).

The protein belongs to the methyltransferase superfamily. tRNA (adenine-N(6)-)-methyltransferase family.

It is found in the cytoplasm. The catalysed reaction is adenosine(37) in tRNA1(Val) + S-adenosyl-L-methionine = N(6)-methyladenosine(37) in tRNA1(Val) + S-adenosyl-L-homocysteine + H(+). Functionally, specifically methylates the adenine in position 37 of tRNA(1)(Val) (anticodon cmo5UAC). In Flavobacterium psychrophilum (strain ATCC 49511 / DSM 21280 / CIP 103535 / JIP02/86), this protein is tRNA1(Val) (adenine(37)-N6)-methyltransferase.